Consider the following 530-residue polypeptide: Probable NADH-specific resorcinol 4-hydroxylase (530 aa).

It catalyses the reaction resorcinol + NADH + O2 + H(+) = benzene-1,2,4-triol + NAD(+) + H2O. Functionally, single-component hydroxylase that is part of the gamma-resorcylate (GRA) degradation pathway. GRA is initially converted by GRA decarboxylase to resorcinol, which is hydroxylated by resorcinol 4-hydroxylase. In Rhodococcus jostii (strain RHA1), this protein is Probable NADH-specific resorcinol 4-hydroxylase (tsdB).